We begin with the raw amino-acid sequence, 311 residues long: MANIKEIARLANVSVSTVSRVLNHHPYVSEEKRKLVHQVMKELDYTPNRTAIDLIRGKTHTVGVILPYSDHPCFDKIVNGITKAAFQHEYATTLLPTNYNPDIEIKYLELLRTKKIDGLIITSRANHWDSILAYQEYGPVIACEDTGDIDVPCAFNDRKTAYAESFRYLKSRGHENIAFTCVREADRSPSTADKAAAYKAVCGRLEDRHMLSGCNDMNDGELAAEHFYMSGRVPTAIYANSDEVAAGIHLFAKKNNWDVEIIGEGNTSISRVLGFPSLDLNLEQLGIAAFSLFLQDEPADIKIQHKFKKKA.

One can recognise an HTH lacI-type domain in the interval 1–56; sequence MANIKEIARLANVSVSTVSRVLNHHPYVSEEKRKLVHQVMKELDYTPNRTAIDLIR. Residues 4-23 constitute a DNA-binding region (H-T-H motif); the sequence is IKEIARLANVSVSTVSRVLN.

As to quaternary structure, seems to be complexed to phosphorylated HPr.

In terms of biological role, transcriptional regulator involved in catabolite repression of several operons. The polypeptide is Catabolite control protein B (ccpB) (Bacillus subtilis (strain 168)).